We begin with the raw amino-acid sequence, 596 residues long: 3-hydroxy-3-methylglutaryl-coenzyme A reductase 1 (596 aa).

The interval 1 to 29 is disordered; it reads MDVRRRPVKPLYTSKDASAGEPLKQQEVS. 2 helical membrane passes run 41 to 61 and 83 to 103; these read LYLTNGLFFTMFFSVMYFLLV and AMVSLIASVIYLLGFFGIGFV. Residues 104-183 are linker; sequence QSFVSRSNSD…SPIIMPALSE (80 aa). Residues 184–596 are catalytic; sequence DDEEIIQSVV…YNRSIKDISK (413 aa). The Charge relay system role is filled by E278. The N-linked (GlcNAc...) asparagine glycan is linked to N342. K410 acts as the Charge relay system in catalysis. N455 is a glycosylation site (N-linked (GlcNAc...) asparagine). D486 acts as the Charge relay system in catalysis. H584 functions as the Proton donor in the catalytic mechanism. N588 carries N-linked (GlcNAc...) asparagine glycosylation.

This sequence belongs to the HMG-CoA reductase family. In terms of tissue distribution, expressed in flower primordia and anthers.

The protein localises to the endoplasmic reticulum membrane. It catalyses the reaction (R)-mevalonate + 2 NADP(+) + CoA = (3S)-3-hydroxy-3-methylglutaryl-CoA + 2 NADPH + 2 H(+). Its pathway is metabolic intermediate biosynthesis; (R)-mevalonate biosynthesis; (R)-mevalonate from acetyl-CoA: step 3/3. Its function is as follows. Catalyzes the synthesis of mevalonate. The specific precursor of all isoprenoid compounds present in plants. The protein is 3-hydroxy-3-methylglutaryl-coenzyme A reductase 1 (HMG1) of Solanum tuberosum (Potato).